We begin with the raw amino-acid sequence, 38 residues long: Large ribosomal subunit protein bL36c (38 aa).

This sequence belongs to the bacterial ribosomal protein bL36 family.

The protein localises to the plastid. It localises to the chloroplast. This Mesostigma viride (Green alga) protein is Large ribosomal subunit protein bL36c (rpl36).